Reading from the N-terminus, the 198-residue chain is Probable nicotinate-nucleotide adenylyltransferase (198 aa).

This sequence belongs to the NadD family.

It catalyses the reaction nicotinate beta-D-ribonucleotide + ATP + H(+) = deamido-NAD(+) + diphosphate. Its pathway is cofactor biosynthesis; NAD(+) biosynthesis; deamido-NAD(+) from nicotinate D-ribonucleotide: step 1/1. In terms of biological role, catalyzes the reversible adenylation of nicotinate mononucleotide (NaMN) to nicotinic acid adenine dinucleotide (NaAD). This is Probable nicotinate-nucleotide adenylyltransferase from Albidiferax ferrireducens (strain ATCC BAA-621 / DSM 15236 / T118) (Rhodoferax ferrireducens).